The following is a 512-amino-acid chain: Catalase (512 aa).

Catalysis depends on residues histidine 60 and asparagine 133. Heme is bound at residue tyrosine 344. Serine 363 bears the Phosphoserine mark. The span at 488 to 505 (EVKKMEEKAPKPINKGEP) shows a compositional bias: basic and acidic residues. Positions 488–512 (EVKKMEEKAPKPINKGEPHMFQGSS) are disordered.

Belongs to the catalase family. Heme serves as cofactor.

It localises to the peroxisome matrix. The enzyme catalyses 2 H2O2 = O2 + 2 H2O. In terms of biological role, catalyzes the degradation of hydrogen peroxide (H(2)O(2)) generated by peroxisomal oxidases to water and oxygen, thereby protecting cells from the toxic effects of hydrogen peroxide. In Schizosaccharomyces pombe (strain 972 / ATCC 24843) (Fission yeast), this protein is Catalase (cta1).